Here is a 23-residue protein sequence, read N- to C-terminus: Cysteine proteinase (23 aa).

Over residues 1–10 the composition is skewed to basic and acidic residues; it reads ADSLDWREKG. Residues 1–23 are disordered; that stretch reads ADSLDWREKGVVNSIKDQAQXGS.

The protein belongs to the peptidase C1 family.

The chain is Cysteine proteinase from Tritrichomonas foetus (Trichomonas foetus).